A 732-amino-acid chain; its full sequence is Zinc/cadmium/lead-transporting P-type ATPase (732 aa).

Over 1-124 the chain is Cytoplasmic; sequence MSTPDNHGKK…QAADEPQASR (124 aa). Positions 48–112 constitute an HMA domain; it reads TRYSWKVSGM…AVQKAGYSLR (65 aa). Residues D58, C59, and C62 each contribute to the Zn(2+) site. A helical membrane pass occupies residues 125–145; the sequence is LKENLPLITLIVMMAISWGLE. Residue Q146 is a topological domain, periplasmic. Residues 147–167 form a helical membrane-spanning segment; sequence FNHPFGQLAFIATTLVGLYPI. The Cytoplasmic portion of the chain corresponds to 168–179; the sequence is ARQALRLIKSGS. A helical transmembrane segment spans residues 180 to 197; it reads YFAIETLMSVAAIGALFI. The Periplasmic portion of the chain corresponds to 198-202; that stretch reads GATAE. The helical transmembrane segment at 203-222 threads the bilayer; it reads AAMVLLLFLIGERLEGWAAS. The Cytoplasmic portion of the chain corresponds to 223 to 356; sequence RARQGVSALM…IDRFSRIYTP (134 aa). A helical transmembrane segment spans residues 357 to 377; that stretch reads AIMAVALLVTLVPPLLFAASW. The Periplasmic segment spans residues 378-383; that stretch reads QEWIYK. Residues 384 to 404 traverse the membrane as a helical segment; it reads GLTLLLIGCPCALVISTPAAI. Zn(2+) contacts are provided by C392 and C394. Residues 405–685 lie on the Cytoplasmic side of the membrane; the sequence is TSGLAAAARR…RATHANIRQN (281 aa). Residue D436 is the 4-aspartylphosphate intermediate of the active site. Residues D436, T438, and D628 each contribute to the Mg(2+) site. A helical transmembrane segment spans residues 686–702; the sequence is ITIALGLKGIFLVTTLL. At 703–707 the chain is on the periplasmic side; it reads GMTGL. Residues 708-729 form a helical membrane-spanning segment; sequence WLAVLADTGATVLVTANALRLL. D714 provides a ligand contact to Zn(2+). Over 730–732 the chain is Cytoplasmic; sequence RRR.

The protein belongs to the cation transport ATPase (P-type) (TC 3.A.3) family. Type IB subfamily.

Its subcellular location is the cell inner membrane. It carries out the reaction Pb(2+)(in) + ATP + H2O = Pb(2+)(out) + ADP + phosphate + H(+). The catalysed reaction is Zn(2+)(in) + ATP + H2O = Zn(2+)(out) + ADP + phosphate + H(+). The enzyme catalyses Cd(2+)(in) + ATP + H2O = Cd(2+)(out) + ADP + phosphate + H(+). Its function is as follows. Confers resistance to zinc, cadmium and lead. Couples the hydrolysis of ATP with the export of zinc, cadmium or lead. The chain is Zinc/cadmium/lead-transporting P-type ATPase from Shigella sonnei (strain Ss046).